The sequence spans 162 residues: Probable chemoreceptor glutamine deamidase CheD (162 aa).

This sequence belongs to the CheD family.

The enzyme catalyses L-glutaminyl-[protein] + H2O = L-glutamyl-[protein] + NH4(+). Functionally, probably deamidates glutamine residues to glutamate on methyl-accepting chemotaxis receptors (MCPs), playing an important role in chemotaxis. This chain is Probable chemoreceptor glutamine deamidase CheD, found in Caldanaerobacter subterraneus subsp. tengcongensis (strain DSM 15242 / JCM 11007 / NBRC 100824 / MB4) (Thermoanaerobacter tengcongensis).